A 257-amino-acid polypeptide reads, in one-letter code: Transcription factor bHLH55 (257 aa).

The 53-residue stretch at 74 to 126 folds into the bHLH domain; that stretch reads NKRAKHKELERQRRQENTSLFKILRYLLPSQYIKGKRSSADHVLEAVNYIKDL.

As to quaternary structure, homodimer. Expressed in roots, leaves, stems, and flowers.

Its subcellular location is the nucleus. This chain is Transcription factor bHLH55 (BHLH55), found in Arabidopsis thaliana (Mouse-ear cress).